A 227-amino-acid polypeptide reads, in one-letter code: TMF-regulated nuclear protein 1 (227 aa).

Disordered stretches follow at residues 1–72 (MPGC…ELQR) and 200–227 (GRLR…SPQR). Residues 22 to 55 (SPPPPWDPMPSSQPPPPTPTLTPTPTPGQSPPLP) show a composition bias toward pro residues.

In terms of assembly, interacts with TMF1; may regulate TRNP1 proteasomal degradation. Post-translationally, ubiquitinated, leading to its degradation by the proteasome.

The protein localises to the nucleus. DNA-binding factor that regulates the expression of a subset of genes and plays a key role in tangential, radial, and lateral expansion of the brain neocortex. Regulates neural stem cells proliferation and the production of intermediate neural progenitors and basal radial glial cells affecting the process of cerebral cortex gyrification. May control the proliferation rate of cells by regulating their progression through key cell-cycle transition points. In Homo sapiens (Human), this protein is TMF-regulated nuclear protein 1 (TRNP1).